A 221-amino-acid chain; its full sequence is uncharacterized protein (221 aa).

This is an uncharacterized protein from Sinorhizobium fredii (strain NBRC 101917 / NGR234).